The sequence spans 343 residues: Fructose-1,6-bisphosphatase, cytosolic (343 aa).

Residues Glu71, Glu100, Asp121, Leu123, and Asp124 each contribute to the Mg(2+) site. Substrate is bound by residues 124 to 127, Asn215, Tyr247, Tyr267, and Lys277; that span reads DGSS. Glu283 serves as a coordination point for Mg(2+).

The protein belongs to the FBPase class 1 family. It depends on Mg(2+) as a cofactor.

Its subcellular location is the cytoplasm. It catalyses the reaction beta-D-fructose 1,6-bisphosphate + H2O = beta-D-fructose 6-phosphate + phosphate. In Saccharum hybrid (Sugarcane), this protein is Fructose-1,6-bisphosphatase, cytosolic (CFBP).